A 142-amino-acid polypeptide reads, in one-letter code: Large ribosomal subunit protein uL13 (142 aa).

The protein belongs to the universal ribosomal protein uL13 family. Part of the 50S ribosomal subunit.

Functionally, this protein is one of the early assembly proteins of the 50S ribosomal subunit, although it is not seen to bind rRNA by itself. It is important during the early stages of 50S assembly. The protein is Large ribosomal subunit protein uL13 of Desulfotalea psychrophila (strain LSv54 / DSM 12343).